Reading from the N-terminus, the 1338-residue chain is Terpene cyclase-glycosyl transferase fusion protein fsoA (1338 aa).

A terpenne cyclase region spans residues 1–687 (MDMAPDELDE…RFLDRTDEPD (687 aa)). PFTB repeat units follow at residues 19–61 (LEQA…PALN), 69–111 (AAAL…RLLG), and 267–307 (LRRC…SLEH). D412 serves as the catalytic Proton donor. 3 PFTB repeats span residues 434-475 (VEMG…DSLV), 515-556 (AQKA…AFCG), and 564-615 (ALRA…LRFR). The segment at 688–1338 (QDRDLPLLMT…NMLLGEGCQG (651 aa)) is glycosyltransferase.

In the N-terminal section; belongs to the terpene cyclase/mutase family. This sequence in the C-terminal section; belongs to the glycosyltransferase 28 family.

It catalyses the reaction (S)-2,3-epoxysqualene = isomotiol. It carries out the reaction isomotiol + UDP-alpha-D-glucose = 3-O-(beta-D-glucopyranosyl)-isomotiol + UDP + H(+). The catalysed reaction is 2alpha-hydroxyisomotiol + UDP-alpha-D-glucose = 3-O-(beta-D-glucopyranosyl)-2alpha-hydroxyisomotiol + UDP + H(+). Its pathway is secondary metabolite biosynthesis; terpenoid biosynthesis. Its function is as follows. Terpene cyclase-glycosyl transferase fusion protein; part of the gene cluster that mediates the biosynthesis of the enfumafungin-type antibiotic, fuscoatroside. Within the pathway, fsoA plays two important roles, the cyclization of 2,3(S)-oxidosqualene into isomotiol via its terpene cyclase (TC) domain and the C3 glycosylation of several intermediates via its glycosyltransferase (GT) domain. The fuscoatroside biosynthesis is initiated by the cyclization of 2,3(S)-oxidosqualene through FsoA's TC domain, leading to the formation of the fernane skeleton isomotiol, harboring a fernane triterpene skeleton with a C8-C9 double bond. Subsequently, C2-alpha-hydroxylation mediated by fsoD results in the production of 2-alpha-hydroxy-isomotiol, which is further acetylated by fsoF. The GT domain of FsoA may convert isomotiol, 2-alpha-hydroxy-isomotiol, and the acetylated derivative of 2-alpha-hydroxy-isomotiol into their corresponding glycosides 3-O-(beta-D-glucopyranosyl)-isomotiol, 3-O-(beta-D-glucopyranosyl)-2-alpha-hydroxy-isomotiol, and 3-O-(beta-D-glucopyranosyl)-2-alpha-acetoxy-isomotiol, which then undergo oxidative cleavage under the action of fsoE to form s 2-deacetoxy-fuscoatroside, 2-deacetyl-fuscoatroside, and fuscoatroside, respectively. Although hydroxylation followed by acetylation of 3-O-(beta-D-glucopyranosyl)-isomotiol and 2-deacetoxy-fuscoatroside by fsoD and fsoF could not be ruled out, this process is likely to occur with difficulty due to bulky steric hindrance caused by the presence of a glycan at C3 in these compounds. Interestingly, fsoE can also utilize the aglycones isomotiol and 2-alpha-hydroxy-isomotiol as substrates to generate 19-beta-hydroxy-isomotiol and 2-alpha,19-beta-dihydroxy-isomotiol, respectively. These reactions occur with lower efficiency. Finally, fsoE can further convert 2-alpha,19-beta-dihydroxy-isomotiol into 2-alpha-hydroxy-ismotiol-19-one and 2-alpha-hydroxy-ismotiol-19-one into 2-deacetyl-3-deglucopyranosyl-fuscoatroside. The chain is Terpene cyclase-glycosyl transferase fusion protein fsoA from Humicola fuscoatra.